The sequence spans 235 residues: Ribitol-5-phosphate cytidylyltransferase (235 aa).

Residues 7 to 10, 82 to 88, and Ser113 contribute to the CTP site; these read LAGG and GADRNTS.

The protein belongs to the IspD/TarI cytidylyltransferase family. TarI subfamily.

The catalysed reaction is D-ribitol 5-phosphate + CTP + H(+) = CDP-L-ribitol + diphosphate. The protein operates within cell wall biogenesis; poly(ribitol phosphate) teichoic acid biosynthesis. In terms of biological role, catalyzes the transfer of the cytidylyl group of CTP to D-ribitol 5-phosphate. This is Ribitol-5-phosphate cytidylyltransferase from Streptococcus pneumoniae (strain CGSP14).